A 447-amino-acid chain; its full sequence is Phosphoglucosamine mutase (447 aa).

Ser-102 serves as the catalytic Phosphoserine intermediate. Residues Ser-102, Asp-241, Asp-243, and Asp-245 each coordinate Mg(2+). Residue Ser-102 is modified to Phosphoserine.

It belongs to the phosphohexose mutase family. The cofactor is Mg(2+). Post-translationally, activated by phosphorylation.

It catalyses the reaction alpha-D-glucosamine 1-phosphate = D-glucosamine 6-phosphate. Its function is as follows. Catalyzes the conversion of glucosamine-6-phosphate to glucosamine-1-phosphate. In Ruegeria sp. (strain TM1040) (Silicibacter sp.), this protein is Phosphoglucosamine mutase.